A 631-amino-acid chain; its full sequence is MSATKLTRREQRAQAQHFIDTLEGTAFPNSKRIYITGTHPGVRVPMREIQLSPTLIGGSKEQPQYEENEAIPVYDTSGPYGDPQIAINVQQGLAKLRQPWIDARGDTEELTVRSSDYTKARLADDGLDELRFSGVLTPKRAKAGRRVTQLHYARRGIITPEMEFIAIRENMGRERIRSEVLRHQHPGMSFGARLPENITAEFVRDEVAAGRAIIPANINHPESEPMIIGRNFLVKVNANIGNSAVTSSIEEEVEKLVWSTRWGADTVMDLSTGRYIHETREWILRNSPVPIGTVPIYQALEKVNGIAEDLTWEAFRDTLLEQAEQGVDYFTIHAGVLLRYVPMTAKRLTGIVSRGGSIMAKWCLSHHQENFLYQHFREICEICAAYDVSLSLGDGLRPGSIQDANDEAQFAELHTLGELTKIAWEYDVQVMIEGPGHVPMQMIRRNMTEELEHCHEAPFYTLGPLTTDIAPGYDHFTSGIGAAMIGWFGCAMLCYVTPKEHLGLPNKEDVKQGLITYKIAAHAADLAKGHPGAQIRDNAMSKARFEFRWEDQFNLALDPFTARAYHDETLPQESGKVAHFCSMCGPKFCSMKISQEVRDYAAAQTIEVGMADMSENFRARGGEIYLRKEEA.

Substrate contacts are provided by residues Asn-239, Met-268, Tyr-297, His-333, Ser-353–Gly-355, Asp-394–Arg-397, and Glu-433. Residue His-437 coordinates Zn(2+). Residue Tyr-460 participates in substrate binding. His-501 serves as a coordination point for Zn(2+). The [4Fe-4S] cluster site is built by Cys-581, Cys-584, and Cys-589.

Belongs to the ThiC family. In terms of assembly, homodimer. Requires [4Fe-4S] cluster as cofactor.

The enzyme catalyses 5-amino-1-(5-phospho-beta-D-ribosyl)imidazole + S-adenosyl-L-methionine = 4-amino-2-methyl-5-(phosphooxymethyl)pyrimidine + CO + 5'-deoxyadenosine + formate + L-methionine + 3 H(+). Its pathway is cofactor biosynthesis; thiamine diphosphate biosynthesis. Its function is as follows. Catalyzes the synthesis of the hydroxymethylpyrimidine phosphate (HMP-P) moiety of thiamine from aminoimidazole ribotide (AIR) in a radical S-adenosyl-L-methionine (SAM)-dependent reaction. The sequence is that of Phosphomethylpyrimidine synthase from Escherichia fergusonii (strain ATCC 35469 / DSM 13698 / CCUG 18766 / IAM 14443 / JCM 21226 / LMG 7866 / NBRC 102419 / NCTC 12128 / CDC 0568-73).